Here is a 294-residue protein sequence, read N- to C-terminus: NAD kinase (294 aa).

The active-site Proton acceptor is the D74. NAD(+) contacts are provided by residues 74-75 (DG), 148-149 (NE), H159, R176, D178, and 189-194 (TAYSLS).

Belongs to the NAD kinase family. It depends on a divalent metal cation as a cofactor.

It is found in the cytoplasm. It carries out the reaction NAD(+) + ATP = ADP + NADP(+) + H(+). Functionally, involved in the regulation of the intracellular balance of NAD and NADP, and is a key enzyme in the biosynthesis of NADP. Catalyzes specifically the phosphorylation on 2'-hydroxyl of the adenosine moiety of NAD to yield NADP. The sequence is that of NAD kinase from Pseudoalteromonas translucida (strain TAC 125).